The sequence spans 450 residues: UDP-N-acetylmuramate--L-alanine ligase (450 aa).

112 to 118 contributes to the ATP binding site; the sequence is GTHGKTT.

It belongs to the MurCDEF family.

The protein resides in the cytoplasm. The catalysed reaction is UDP-N-acetyl-alpha-D-muramate + L-alanine + ATP = UDP-N-acetyl-alpha-D-muramoyl-L-alanine + ADP + phosphate + H(+). Its pathway is cell wall biogenesis; peptidoglycan biosynthesis. In terms of biological role, cell wall formation. The protein is UDP-N-acetylmuramate--L-alanine ligase of Endomicrobium trichonymphae.